The sequence spans 342 residues: Fructose-1,6-bisphosphatase class 1 (342 aa).

Positions 97, 119, 121, and 122 each coordinate Mg(2+). Residues 122–125 (DGSS), Asn215, Tyr247, and Lys280 each bind substrate. Glu286 contributes to the Mg(2+) binding site.

The protein belongs to the FBPase class 1 family. In terms of assembly, homotetramer. Requires Mg(2+) as cofactor.

It localises to the cytoplasm. The catalysed reaction is beta-D-fructose 1,6-bisphosphate + H2O = beta-D-fructose 6-phosphate + phosphate. It functions in the pathway carbohydrate biosynthesis; gluconeogenesis. The protein is Fructose-1,6-bisphosphatase class 1 of Leptospira borgpetersenii serovar Hardjo-bovis (strain JB197).